The chain runs to 358 residues: UDP-N-acetylglucosamine--N-acetylmuramyl-(pentapeptide) pyrophosphoryl-undecaprenol N-acetylglucosamine transferase (358 aa).

UDP-N-acetyl-alpha-D-glucosamine is bound by residues 11–13 (TGG), arginine 163, serine 191, isoleucine 245, and glutamine 290.

It belongs to the glycosyltransferase 28 family. MurG subfamily.

Its subcellular location is the cell inner membrane. The enzyme catalyses di-trans,octa-cis-undecaprenyl diphospho-N-acetyl-alpha-D-muramoyl-L-alanyl-D-glutamyl-meso-2,6-diaminopimeloyl-D-alanyl-D-alanine + UDP-N-acetyl-alpha-D-glucosamine = di-trans,octa-cis-undecaprenyl diphospho-[N-acetyl-alpha-D-glucosaminyl-(1-&gt;4)]-N-acetyl-alpha-D-muramoyl-L-alanyl-D-glutamyl-meso-2,6-diaminopimeloyl-D-alanyl-D-alanine + UDP + H(+). It functions in the pathway cell wall biogenesis; peptidoglycan biosynthesis. Functionally, cell wall formation. Catalyzes the transfer of a GlcNAc subunit on undecaprenyl-pyrophosphoryl-MurNAc-pentapeptide (lipid intermediate I) to form undecaprenyl-pyrophosphoryl-MurNAc-(pentapeptide)GlcNAc (lipid intermediate II). The sequence is that of UDP-N-acetylglucosamine--N-acetylmuramyl-(pentapeptide) pyrophosphoryl-undecaprenol N-acetylglucosamine transferase from Janthinobacterium sp. (strain Marseille) (Minibacterium massiliensis).